We begin with the raw amino-acid sequence, 94 residues long: Small ribosomal subunit protein bS6 (94 aa).

This sequence belongs to the bacterial ribosomal protein bS6 family.

Functionally, binds together with bS18 to 16S ribosomal RNA. The polypeptide is Small ribosomal subunit protein bS6 (Akkermansia muciniphila (strain ATCC BAA-835 / DSM 22959 / JCM 33894 / BCRC 81048 / CCUG 64013 / CIP 107961 / Muc)).